The chain runs to 183 residues: MSRIGNRVITVPSNVSVNQTKELLTVKGPLGQLDLKLKEGSKIKVNVENNEIRLTRGDELKQTKMLHGTYNALIKNALEGVTVGFKKELRLVGVGYRASLKDNVLNLQLGYSHPINLDIPKDLKVTVDKNTEITVSGIDKQKVGEFAIQIRKWRMPEPYKGKGVLYLNEQIIRKAGKTAEGKK.

The protein belongs to the universal ribosomal protein uL6 family. Part of the 50S ribosomal subunit.

Functionally, this protein binds to the 23S rRNA, and is important in its secondary structure. It is located near the subunit interface in the base of the L7/L12 stalk, and near the tRNA binding site of the peptidyltransferase center. The protein is Large ribosomal subunit protein uL6 of Mycoplasmoides gallisepticum (strain R(low / passage 15 / clone 2)) (Mycoplasma gallisepticum).